We begin with the raw amino-acid sequence, 221 residues long: Protein LURP-one-related 17 (221 aa).

Residues 1–20 are disordered; it reads MFPFLKQRSRSVHGEDAPSS.

The protein belongs to the LOR family.

Functionally, might be related to the phospholipid scramblase and tubby-like superfamily of membrane tethered transcription factors. This chain is Protein LURP-one-related 17, found in Arabidopsis thaliana (Mouse-ear cress).